We begin with the raw amino-acid sequence, 397 residues long: S-adenosylmethionine:tRNA ribosyltransferase-isomerase (397 aa).

Belongs to the QueA family. In terms of assembly, monomer.

It localises to the cytoplasm. The catalysed reaction is 7-aminomethyl-7-carbaguanosine(34) in tRNA + S-adenosyl-L-methionine = epoxyqueuosine(34) in tRNA + adenine + L-methionine + 2 H(+). It functions in the pathway tRNA modification; tRNA-queuosine biosynthesis. Transfers and isomerizes the ribose moiety from AdoMet to the 7-aminomethyl group of 7-deazaguanine (preQ1-tRNA) to give epoxyqueuosine (oQ-tRNA). In Nostoc sp. (strain PCC 7120 / SAG 25.82 / UTEX 2576), this protein is S-adenosylmethionine:tRNA ribosyltransferase-isomerase.